The chain runs to 112 residues: Urease subunit gamma (112 aa).

It belongs to the urease gamma subunit family. As to quaternary structure, heterotrimer of UreA (gamma), UreB (beta) and UreC (alpha) subunits. Three heterotrimers associate to form the active enzyme.

It localises to the cytoplasm. The catalysed reaction is urea + 2 H2O + H(+) = hydrogencarbonate + 2 NH4(+). Its pathway is nitrogen metabolism; urea degradation; CO(2) and NH(3) from urea (urease route): step 1/1. This is Urease subunit gamma from Gloeothece citriformis (strain PCC 7424) (Cyanothece sp. (strain PCC 7424)).